A 118-amino-acid chain; its full sequence is Large ribosomal subunit protein bL20 (118 aa).

Belongs to the bacterial ribosomal protein bL20 family.

Binds directly to 23S ribosomal RNA and is necessary for the in vitro assembly process of the 50S ribosomal subunit. It is not involved in the protein synthesizing functions of that subunit. This chain is Large ribosomal subunit protein bL20, found in Staphylococcus haemolyticus (strain JCSC1435).